We begin with the raw amino-acid sequence, 333 residues long: Global transcription regulator sge1 (333 aa).

Disordered stretches follow at residues 93–139 and 241–307; these read PPGE…PSVP and QHQS…PQYQ.

The protein belongs to the MIT1/WOR1 family.

Its subcellular location is the nucleus. Global transcriptional regulator that acts as an activator of secondary metabolism. Required for expression of a yet uncharacterized secondary metabolism gene cluster containing a non-canonical non-ribosomal peptide synthetase. Not required for conidiogenesis nor for pathogenicity, but is involved in vegetative growth. This chain is Global transcription regulator sge1, found in Gibberella fujikuroi (strain CBS 195.34 / IMI 58289 / NRRL A-6831) (Bakanae and foot rot disease fungus).